The following is a 343-amino-acid chain: Methionine import ATP-binding protein MetN 1 (343 aa).

The region spanning 2–241 is the ABC transporter domain; it reads IKLTHISKVF…PKTPLAQQFI (240 aa). ATP is bound at residue 38-45; the sequence is GASGAGKS.

Belongs to the ABC transporter superfamily. Methionine importer (TC 3.A.1.24) family. In terms of assembly, the complex is composed of two ATP-binding proteins (MetN), two transmembrane proteins (MetI) and a solute-binding protein (MetQ).

The protein localises to the cell inner membrane. The enzyme catalyses L-methionine(out) + ATP + H2O = L-methionine(in) + ADP + phosphate + H(+). It carries out the reaction D-methionine(out) + ATP + H2O = D-methionine(in) + ADP + phosphate + H(+). Its function is as follows. Part of the ABC transporter complex MetNIQ involved in methionine import. Responsible for energy coupling to the transport system. The chain is Methionine import ATP-binding protein MetN 1 from Yersinia pestis bv. Antiqua (strain Antiqua).